A 199-amino-acid chain; its full sequence is TATA-box-binding protein (199 aa).

2 consecutive repeat copies span residues 10–86 (IENI…VKLL) and 101–177 (IQNI…YNQL).

It belongs to the TBP family.

Its function is as follows. General factor that plays a role in the activation of archaeal genes transcribed by RNA polymerase. Binds specifically to the TATA box promoter element which lies close to the position of transcription initiation. This chain is TATA-box-binding protein, found in Pyrobaculum aerophilum (strain ATCC 51768 / DSM 7523 / JCM 9630 / CIP 104966 / NBRC 100827 / IM2).